The sequence spans 151 residues: UPF0178 protein PSHAb0045 (151 aa).

Belongs to the UPF0178 family.

The polypeptide is UPF0178 protein PSHAb0045 (Pseudoalteromonas translucida (strain TAC 125)).